Consider the following 217-residue polypeptide: Eukaryotic translation initiation factor 4E (217 aa).

Residues 1 to 11 (MATVEPETTPT) are compositionally biased toward low complexity. Positions 1-27 (MATVEPETTPTTNPPPAEEEKTESNQE) are disordered. Position 2 is an N-acetylalanine (A2). Residue T22 is modified to Phosphothreonine. Residues 37 to 40 (HPLQ) are EIF4EBP1/2/3 binding. MRNA is bound at residue 56 to 57 (WQ). The tract at residues 73-77 (WALYN) is EIF4EBP1/2/3 binding. 102–103 (WE) lines the mRNA pocket. Residues 132–139 (ETLLCLIG) are EIF4EBP1/2/3 binding. MRNA is bound by residues 157–162 (RAKGDK) and 205–207 (TKS). S209 carries the phosphoserine; by PKC and MKNK2 modification.

This sequence belongs to the eukaryotic initiation factor 4E family. As to quaternary structure, eIF4F is a multi-subunit complex, the composition of which varies with external and internal environmental conditions. It is composed of at least EIF4A, EIF4E and EIF4G1/EIF4G3. EIF4E is also known to interact with other partners. Interacts with EIF4ENIF1/4E-T; promotes recruitment to P-bodies and import into the nucleus. Hypophosphorylated EIF4EBP1, EIF4EBP2 and EIF4EBP3 compete with EIF4G1/EIF4G3 to interact with EIF4E; insulin stimulated MAP-kinase (MAPK1 and MAPK3) phosphorylation of EIF4EBP1 causes dissociation of the complex allowing EIF4G1/EIF4G3 to bind and consequent initiation of translation. Interacts mutually exclusive with EIF4A1 or EIF4A2. Interacts with NGDN and PIWIL2. Component of the CYFIP1-EIF4E-FMR1 complex composed of CYFIP, EIF4E and FMR1. Interacts directly with CYFIP1. Interacts with CLOCK. Binds to MKNK2 in nucleus. Interacts with LIMD1, WTIP and AJUBA. Interacts with APOBEC3G in an RNA-dependent manner. Interacts with LARP1. Interacts with METTL3. Interacts with RBM24; this interaction prevents EIF4E from binding to p53/TP53 mRNA and inhibits the assembly of translation initiation complex. Interacts with DDX3X; interaction is direct and in an RNA-independent manner; this interaction enhances EIF4E cap-binding ability and is required for the repression of cap-dependent translation and the increase of IRES-mediated translation. DDX3X competes with EIF4G1 for interaction with EIF4E. Interacts with EIF4G1; which in a mutual exclusive interaction associates either with EIF1 or with EIF4E on a common binding site. Interacts with BTG4 and CNOT7. Interacts with LRPPRC (via N-terminus); the interaction promotes association of EIF4E with 4ESE-containing mRNAs. Interacts with mRNA cleavage enzyme CPSF3 and its cofactor CPSF1. Interacts (via RING-type zinc finger) with PML; the interaction results in conformational changes of both interacting proteins and reduces EIF4E affinity for the 5' m7G cap of mRNA, thus reducing EIF4E-mediated mRNA nuclear export. Interacts with homeobox protein HHEX/PRH; the interaction inhibits EIF4E-mediated mRNA nuclear export. Interacts with homeobox protein HOXA9; the interaction positively regulates EIF4E-mediated mRNA nuclear export. Interacts with homeobox protein EMX2. In terms of assembly, (Microbial infection) Interacts with murine norovirus viral genome-linked protein; this interaction plays a role in translation of viral proteins. In terms of processing, phosphorylation increases the ability of the protein to bind to mRNA caps and to form the eIF4F complex. Phosphorylation also enhances its mRNA transport function. Phosphorylation at Ser-209 is not essential for protein synthesis.

It localises to the cytoplasm. Its subcellular location is the P-body. The protein resides in the stress granule. It is found in the nucleus. The protein localises to the nucleus speckle. It localises to the nuclear body. In terms of biological role, acts in the cytoplasm to initiate and regulate protein synthesis and is required in the nucleus for export of a subset of mRNAs from the nucleus to the cytoplasm which promotes processes such as RNA capping, processing and splicing. Component of the protein complex eIF4F, which is involved in the recognition of the mRNA cap, ATP-dependent unwinding of 5'-terminal secondary structure and recruitment of mRNA to the ribosome. This protein recognizes and binds the 7-methylguanosine (m7G)-containing mRNA cap during an early step in the initiation of protein synthesis and facilitates ribosome binding by inducing the unwinding of the mRNAs secondary structures. Together with EIF4G1, antagonizes the scanning promoted by EIF1-EIF4G1 and is required for TISU translation, a process where the TISU element recognition makes scanning unnecessary. In addition to its role in translation initiation, also acts as a regulator of translation and stability in the cytoplasm. Component of the CYFIP1-EIF4E-FMR1 complex which binds to the mRNA cap and mediates translational repression: in the complex, EIF4E mediates the binding to the mRNA cap. Component of a multiprotein complex that sequesters and represses translation of proneurogenic factors during neurogenesis. In P-bodies, component of a complex that mediates the storage of translationally inactive mRNAs in the cytoplasm and prevents their degradation. May play an important role in spermatogenesis through translational regulation of stage-specific mRNAs during germ cell development. As well as its roles in translation, also involved in mRNA nucleocytoplasmic transport. Its role in mRNA export from the nucleus to the cytoplasm relies on its ability to bind the m7G cap of RNAs and on the presence of the 50-nucleotide EIF4E sensitivity element (4ESE) in the 3'UTR of sensitive transcripts. Interaction with the 4ESE is mediated by LRPPRC which binds simultaneously to both EIF4E and the 4ESE, thereby acting as a platform for assembly for the RNA export complex. EIF4E-dependent mRNA export is independent of ongoing protein or RNA synthesis and is also NFX1-independent but is XPO1-dependent with LRPPRC interacting with XPO1 to form an EIF4E-dependent mRNA export complex. Alters the composition of the cytoplasmic face of the nuclear pore to promote RNA export by reducing RANBP2 expression, relocalizing nucleoporin NUP214 and increasing expression of RANBP1 and RNA export factors DDX19 and GLE1. Promotes the nuclear export of cyclin CCND1 mRNA. Promotes the nuclear export of NOS2/iNOS mRNA. Promotes the nuclear export of MDM2 mRNA. Also promotes the export of additional mRNAs, including others involved in the cell cycle. In the nucleus, binds to capped splice factor-encoding mRNAs and stimulates their nuclear export to enhance splice factor production by increasing their cytoplasmic availability to the translation machinery. May also regulate splicing through interaction with the spliceosome in an RNA and m7G cap-dependent manner. Also binds to some pre-mRNAs and may play a role in their recruitment to the spliceosome. Promotes steady-state capping of a subset of coding and non-coding RNAs by mediating nuclear export of capping machinery mRNAs including RNMT, RNGTT and RAMAC to enhance their translation. Stimulates mRNA 3'-end processing by promoting the expression of several core cleavage complex factors required for mRNA cleavage and polyadenylation, and may also have a direct effect through its interaction with the CPSF3 cleavage enzyme. Rescues cells from apoptosis by promoting activation of serine/threonine-protein kinase AKT1 through mRNA export of NBS1 which potentiates AKT1 phosphorylation and also through mRNA export of AKT1 effectors, allowing for increased production of these proteins. The sequence is that of Eukaryotic translation initiation factor 4E from Mus musculus (Mouse).